Reading from the N-terminus, the 255-residue chain is Kallikrein-4 (255 aa).

The first 25 residues, 1 to 25 (MMVTARTPWGWFLGCLILEVTGASA), serve as a signal peptide directing secretion. The propeptide occupies 26-31 (SSVSSR). Residues 32–253 (IIQGQDCSPH…FTNWIQTIIQ (222 aa)) enclose the Peptidase S1 domain. Histidine 41 is a binding site for Zn(2+). Cysteines 57 and 73 form a disulfide. Histidine 72 acts as the Charge relay system in catalysis. A Zn(2+)-binding site is contributed by glutamate 92. Residue aspartate 117 is the Charge relay system of the active site. 2 N-linked (GlcNAc...) asparagine glycosylation sites follow: asparagine 124 and asparagine 170. 3 disulfide bridges follow: cysteine 149-cysteine 214, cysteine 179-cysteine 193, and cysteine 204-cysteine 229. The active-site Charge relay system is the serine 208.

The protein belongs to the peptidase S1 family. Kallikrein subfamily. Post-translationally, N-glycosylated. The N-glycan structures are of complex diantennary or triantennary type, which may be further modified with up to 2 sialic acid residues.

It is found in the secreted. Functionally, has a major role in enamel formation. Required during the maturation stage of tooth development for clearance of enamel proteins and normal structural patterning of the crystalline matrix. The chain is Kallikrein-4 from Mus musculus (Mouse).